The chain runs to 668 residues: S-adenosyl-L-methionine-dependent tRNA 4-demethylwyosine synthase TYW1B (668 aa).

The region spanning 37–191 is the Flavodoxin-like domain; that stretch reads CVQIVIEMQG…NFRAWKTKFI (155 aa). Residues 43-47 and 130-162 contribute to the FMN site; these read EMQGF and VFGL…HRVM. The disordered stretch occupies residues 202-269; it reads RKKSCGGHCK…QSLNSIVDVE (68 aa). Composition is skewed to basic and acidic residues over residues 213–223 and 233–243; these read GKCESHQHGSE and DELHHRDTKEE. Residues 244–255 show a composition bias toward acidic residues; sequence EPFESSSEEEFG. The Radical SAM core domain maps to 336–580; the sequence is LWNESHRCME…VDLIPEYEIA (245 aa). [4Fe-4S] cluster is bound by residues cysteine 352, cysteine 356, and cysteine 359.

It belongs to the TYW1 family. The cofactor is [4Fe-4S] cluster.

It catalyses the reaction N(1)-methylguanosine(37) in tRNA(Phe) + pyruvate + S-adenosyl-L-methionine = 4-demethylwyosine(37) in tRNA(Phe) + 5'-deoxyadenosine + L-methionine + CO2 + H2O. The protein operates within tRNA modification; wybutosine-tRNA(Phe) biosynthesis. Functionally, probable component of the wybutosine biosynthesis pathway. Wybutosine is a hyper modified guanosine with a tricyclic base found at the 3'-position adjacent to the anticodon of eukaryotic phenylalanine tRNA. Catalyzes the condensation of N-methylguanine with 2 carbon atoms from pyruvate to form the tricyclic 4-demethylwyosine, an intermediate in wybutosine biosynthesis. The protein is S-adenosyl-L-methionine-dependent tRNA 4-demethylwyosine synthase TYW1B (TYW1B) of Homo sapiens (Human).